The primary structure comprises 365 residues: Snurportin-1 (365 aa).

The region spanning 10–72 (GGVALAAPNS…RLAEGDWAGV (63 aa)) is the IBB domain. 2 disordered regions span residues 15–34 (AAPN…KGRG) and 69–90 (WAGV…EMEV). Residues 73-90 (ESDEDGGEDGDGEEEMEV) show a composition bias toward acidic residues. An interaction with m3G-cap structure region spans residues 129–131 (GKR). Residues 211-333 (LSSKIQEEEG…GKAQPSAEAA (123 aa)) form a necessary for binding to the m3G-cap structure region. The disordered stretch occupies residues 317–365 (RSKKLAAGKAQPSAEAAARNGHYELEHLSTPQPANSAQGQEEAGSQMEN). The span at 345–355 (STPQPANSAQG) shows a compositional bias: polar residues.

It belongs to the snurportin family.

It is found in the nucleus. Its subcellular location is the cytoplasm. In terms of biological role, functions as an U snRNP-specific nuclear import adapter. Involved in the trimethylguanosine (m3G)-cap-dependent nuclear import of U snRNPs. Binds specifically to the terminal m3G-cap U snRNAs. The polypeptide is Snurportin-1 (SNUPN) (Gallus gallus (Chicken)).